The sequence spans 247 residues: tRNA uridine(34) hydroxylase (247 aa).

Positions Thr124–Asn218 constitute a Rhodanese domain. Cys178 serves as the catalytic Cysteine persulfide intermediate.

It belongs to the TrhO family.

The catalysed reaction is uridine(34) in tRNA + AH2 + O2 = 5-hydroxyuridine(34) in tRNA + A + H2O. Functionally, catalyzes oxygen-dependent 5-hydroxyuridine (ho5U) modification at position 34 in tRNAs. The chain is tRNA uridine(34) hydroxylase from Rickettsia akari (strain Hartford).